A 179-amino-acid polypeptide reads, in one-letter code: MSRIGKQPIPVPSGVEVKLGADVVEVKGPKGSLTTPVSPLLKYEIQDGSVVITRVEETKKASAQHGLRRTLLANCIEGVSKGFSKVLEVNGVGYKVAVKGNNIELALGFSHPVVIELPKGIEAAAAGNKLTISGFDKQLVGEVAANIRRVRPPEPYKGKGVKYEHEQIRRKAGKSGGKK.

The segment covering 154–169 has biased composition (basic and acidic residues); sequence EPYKGKGVKYEHEQIR. Residues 154-179 form a disordered region; the sequence is EPYKGKGVKYEHEQIRRKAGKSGGKK. The span at 170 to 179 shows a compositional bias: basic residues; sequence RKAGKSGGKK.

It belongs to the universal ribosomal protein uL6 family. In terms of assembly, part of the 50S ribosomal subunit.

Functionally, this protein binds to the 23S rRNA, and is important in its secondary structure. It is located near the subunit interface in the base of the L7/L12 stalk, and near the tRNA binding site of the peptidyltransferase center. The chain is Large ribosomal subunit protein uL6 from Oleidesulfovibrio alaskensis (strain ATCC BAA-1058 / DSM 17464 / G20) (Desulfovibrio alaskensis).